An 816-amino-acid polypeptide reads, in one-letter code: Molybdenum cofactor sulfurase (816 aa).

An N6-(pyridoxal phosphate)lysine modification is found at lysine 273. Cysteine 427 is a catalytic residue. An MOSC domain is found at 647-812 (NSDSQSHSCI…IRVGEEIIPN (166 aa)).

The protein belongs to the class-V pyridoxal-phosphate-dependent aminotransferase family. MOCOS subfamily. It depends on pyridoxal 5'-phosphate as a cofactor. In terms of tissue distribution, ubiquitously expressed.

It catalyses the reaction Mo-molybdopterin + L-cysteine + AH2 = thio-Mo-molybdopterin + L-alanine + A + H2O. Its pathway is cofactor biosynthesis; molybdopterin biosynthesis. Functionally, sulfurates the molybdenum cofactor. Sulfation of molybdenum is essential for xanthine dehydrogenase (XDH) and aldehyde oxidase (ADO) enzymes in which molybdenum cofactor is liganded by 1 oxygen and 1 sulfur atom in active form. The protein is Molybdenum cofactor sulfurase (FLACCA) of Solanum lycopersicum (Tomato).